A 98-amino-acid chain; its full sequence is Integration host factor subunit beta (98 aa).

This sequence belongs to the bacterial histone-like protein family. In terms of assembly, heterodimer of an alpha and a beta chain.

In terms of biological role, this protein is one of the two subunits of integration host factor, a specific DNA-binding protein that functions in genetic recombination as well as in transcriptional and translational control. This Hahella chejuensis (strain KCTC 2396) protein is Integration host factor subunit beta.